We begin with the raw amino-acid sequence, 265 residues long: 4-hydroxy-tetrahydrodipicolinate reductase (265 aa).

NAD(+) is bound by residues 7–12 and Asp33; that span reads GASGRM. Arg34 contacts NADP(+). Residues 96 to 98 and 120 to 123 each bind NAD(+); these read GTT and AANM. Residue His153 is the Proton donor/acceptor of the active site. His154 serves as a coordination point for (S)-2,3,4,5-tetrahydrodipicolinate. Catalysis depends on Lys157, which acts as the Proton donor. Residue 163–164 participates in (S)-2,3,4,5-tetrahydrodipicolinate binding; sequence GT.

Belongs to the DapB family.

It localises to the cytoplasm. The enzyme catalyses (S)-2,3,4,5-tetrahydrodipicolinate + NAD(+) + H2O = (2S,4S)-4-hydroxy-2,3,4,5-tetrahydrodipicolinate + NADH + H(+). It carries out the reaction (S)-2,3,4,5-tetrahydrodipicolinate + NADP(+) + H2O = (2S,4S)-4-hydroxy-2,3,4,5-tetrahydrodipicolinate + NADPH + H(+). The protein operates within amino-acid biosynthesis; L-lysine biosynthesis via DAP pathway; (S)-tetrahydrodipicolinate from L-aspartate: step 4/4. Its function is as follows. Catalyzes the conversion of 4-hydroxy-tetrahydrodipicolinate (HTPA) to tetrahydrodipicolinate. This Burkholderia cenocepacia (strain ATCC BAA-245 / DSM 16553 / LMG 16656 / NCTC 13227 / J2315 / CF5610) (Burkholderia cepacia (strain J2315)) protein is 4-hydroxy-tetrahydrodipicolinate reductase.